We begin with the raw amino-acid sequence, 376 residues long: Alanine racemase (376 aa).

Lys40 serves as the catalytic Proton acceptor; specific for D-alanine. Lys40 bears the N6-(pyridoxal phosphate)lysine mark. Residue Arg138 coordinates substrate. Catalysis depends on Tyr270, which acts as the Proton acceptor; specific for L-alanine. Met317 is a substrate binding site.

Belongs to the alanine racemase family. Pyridoxal 5'-phosphate is required as a cofactor.

It carries out the reaction L-alanine = D-alanine. The protein operates within amino-acid biosynthesis; D-alanine biosynthesis; D-alanine from L-alanine: step 1/1. Functionally, catalyzes the interconversion of L-alanine and D-alanine. May also act on other amino acids. The chain is Alanine racemase (alr) from Lactobacillus delbrueckii subsp. bulgaricus (strain ATCC BAA-365 / Lb-18).